A 687-amino-acid polypeptide reads, in one-letter code: Mu-like prophage FluMu transposase A (687 aa).

The HTH Mu-type domain maps to 8–74 (THYSVYELAN…ELLLKTTPEQ (67 aa)). Residues 398-417 (PIERAFSHGGLGDYVDKHLL) constitute a DNA-binding region (H-T-H motif).

Its function is as follows. This transposase is essential for integration, replication-transposition, and excision of Mu-like viral DNA. This is Mu-like prophage FluMu transposase A from Haemophilus influenzae (strain ATCC 51907 / DSM 11121 / KW20 / Rd).